The primary structure comprises 884 residues: Alanine--tRNA ligase (884 aa).

Zn(2+) is bound by residues His-562, His-566, Cys-674, and His-678.

It belongs to the class-II aminoacyl-tRNA synthetase family. Requires Zn(2+) as cofactor.

The protein resides in the cytoplasm. The enzyme catalyses tRNA(Ala) + L-alanine + ATP = L-alanyl-tRNA(Ala) + AMP + diphosphate. Functionally, catalyzes the attachment of alanine to tRNA(Ala) in a two-step reaction: alanine is first activated by ATP to form Ala-AMP and then transferred to the acceptor end of tRNA(Ala). Also edits incorrectly charged Ser-tRNA(Ala) and Gly-tRNA(Ala) via its editing domain. This chain is Alanine--tRNA ligase, found in Rhizobium johnstonii (strain DSM 114642 / LMG 32736 / 3841) (Rhizobium leguminosarum bv. viciae).